Consider the following 147-residue polypeptide: Hemoglobin subunit beta-1 (147 aa).

Val-2 carries the N-acetylvaline modification. Positions 3–147 constitute a Globin domain; sequence HLTDAEKAAV…VASALAHKYH (145 aa). Lys-18 is subject to N6-succinyllysine. Phosphoserine is present on residues Ser-45, Ser-51, and Ser-53. At Lys-60 the chain carries N6-succinyllysine. Heme b is bound by residues His-64 and His-93. Asymmetric dimethylarginine is present on Arg-105. Thr-124 bears the Phosphothreonine mark.

It belongs to the globin family. As to quaternary structure, heterotetramer of two alpha chains and two beta chains. Red blood cells.

Functionally, involved in oxygen transport from the lung to the various peripheral tissues. This is Hemoglobin subunit beta-1 (Hbb) from Rattus norvegicus (Rat).